The sequence spans 265 residues: RWD domain-containing protein 3 (265 aa).

The 108-residue stretch at 7–114 (EEVAALSAIY…WTQQNLNNLI (108 aa)) folds into the RWD domain.

It is found in the nucleus. The protein localises to the cytoplasm. Its function is as follows. Enhancer of SUMO conjugation. Increases SUMO conjugation to proteins by promoting the: binding of E1 and E2 enzymes, thioester linkage between SUMO and ube2i/ubc9 and transfer of SUMO to specific target proteins which include hif1a, pias, nfkbia, nr3c1 and top1. Has no effect on ubiquitination. The polypeptide is RWD domain-containing protein 3 (rwdd3) (Xenopus tropicalis (Western clawed frog)).